Reading from the N-terminus, the 236-residue chain is Ribose-5-phosphate isomerase A (236 aa).

Substrate contacts are provided by residues 31-34, 84-87, and 97-100; these read TGST, DGAD, and KGGG. Glu106 (proton acceptor) is an active-site residue. Residue Lys124 coordinates substrate.

It belongs to the ribose 5-phosphate isomerase family. Homodimer.

It carries out the reaction aldehydo-D-ribose 5-phosphate = D-ribulose 5-phosphate. Its pathway is carbohydrate degradation; pentose phosphate pathway; D-ribose 5-phosphate from D-ribulose 5-phosphate (non-oxidative stage): step 1/1. Its function is as follows. Catalyzes the reversible conversion of ribose-5-phosphate to ribulose 5-phosphate. This chain is Ribose-5-phosphate isomerase A, found in Polynucleobacter asymbioticus (strain DSM 18221 / CIP 109841 / QLW-P1DMWA-1) (Polynucleobacter necessarius subsp. asymbioticus).